A 401-amino-acid polypeptide reads, in one-letter code: tRNA(Met) cytidine acetate ligase (401 aa).

Residues 7-20, glycine 102, asparagine 164, and arginine 189 each bind ATP; that span reads IVEY…HLYH.

The protein belongs to the TmcAL family.

It localises to the cytoplasm. The catalysed reaction is cytidine(34) in elongator tRNA(Met) + acetate + ATP = N(4)-acetylcytidine(34) in elongator tRNA(Met) + AMP + diphosphate. In terms of biological role, catalyzes the formation of N(4)-acetylcytidine (ac(4)C) at the wobble position of elongator tRNA(Met), using acetate and ATP as substrates. First activates an acetate ion to form acetyladenylate (Ac-AMP) and then transfers the acetyl group to tRNA to form ac(4)C34. This is tRNA(Met) cytidine acetate ligase from Thermoanaerobacter sp. (strain X514).